Here is a 272-residue protein sequence, read N- to C-terminus: Isoprenyl transferase (272 aa).

The active site involves D32. D32 is a Mg(2+) binding site. Substrate contacts are provided by residues 33–36 (GNGR), W37, R45, H49, and 77–79 (STE). The active-site Proton acceptor is the N80. Substrate-binding positions include W81, R83, R200, and 206-208 (RIS). E219 lines the Mg(2+) pocket.

The protein belongs to the UPP synthase family. As to quaternary structure, homodimer. Mg(2+) is required as a cofactor.

Catalyzes the condensation of isopentenyl diphosphate (IPP) with allylic pyrophosphates generating different type of terpenoids. This chain is Isoprenyl transferase, found in Prochlorococcus marinus subsp. pastoris (strain CCMP1986 / NIES-2087 / MED4).